The following is a 255-amino-acid chain: GTP cyclohydrolase III 1 (255 aa).

This sequence belongs to the archaeal-type GTP cyclohydrolase family.

It catalyses the reaction GTP + 3 H2O = 2-amino-5-formylamino-6-(5-phospho-D-ribosylamino)pyrimidin-4(3H)-one + 2 phosphate + 2 H(+). Functionally, catalyzes the formation of 2-amino-5-formylamino-6-ribofuranosylamino-4(3H)-pyrimidinone ribonucleotide monophosphate and inorganic phosphate from GTP. Also has an independent pyrophosphate phosphohydrolase activity. The polypeptide is GTP cyclohydrolase III 1 (gch31) (Halobacterium salinarum (strain ATCC 700922 / JCM 11081 / NRC-1) (Halobacterium halobium)).